A 392-amino-acid polypeptide reads, in one-letter code: MTLLGTALRPAATRVMLLGSGELGKEVAIECQRLGIEVIAVDRYPDAPAMHVAHRSHVINMLDGEALRHVIAVEKPHYIVPEIEAIATDTLRDLEDEGLNVVPCARATQLTMNREGIRRLAAEELGLPTSTYRFADSEASFRDAVAAVGFPCIVKPVMSSSGKGQSFIRSPEQLAQAWKYAQQGGRAGAGRVIVEGVVKFDFEITLLTVSAVDGVYFCAPVGHRQQDGDYRESWQPQQMSELALKRAQEIARHVVLALGGHGLFGVELFVCGDEVIFSEVSPRPHDTGMVTLISQDLSEFALHVRAFLGLPVGAIRQYGPAASAVILPQLTSRNVTFDNVQAAVGAGLQVRFFGKPEIDGARRLGVALATGENVEEAVIRAKKAVSSVIVKE.

N(1)-(5-phospho-beta-D-ribosyl)glycinamide contacts are provided by residues 22–23 (EL) and glutamate 82. ATP is bound by residues arginine 114, lysine 155, 160-165 (SSGKGQ), 195-198 (EGVV), and glutamate 203. The 190-residue stretch at 119-308 (RLAAEELGLP…EFALHVRAFL (190 aa)) folds into the ATP-grasp domain. Positions 267 and 279 each coordinate Mg(2+). N(1)-(5-phospho-beta-D-ribosyl)glycinamide contacts are provided by residues aspartate 286, lysine 355, and 362 to 363 (RR).

This sequence belongs to the PurK/PurT family. Homodimer.

The catalysed reaction is N(1)-(5-phospho-beta-D-ribosyl)glycinamide + formate + ATP = N(2)-formyl-N(1)-(5-phospho-beta-D-ribosyl)glycinamide + ADP + phosphate + H(+). It functions in the pathway purine metabolism; IMP biosynthesis via de novo pathway; N(2)-formyl-N(1)-(5-phospho-D-ribosyl)glycinamide from N(1)-(5-phospho-D-ribosyl)glycinamide (formate route): step 1/1. Functionally, involved in the de novo purine biosynthesis. Catalyzes the transfer of formate to 5-phospho-ribosyl-glycinamide (GAR), producing 5-phospho-ribosyl-N-formylglycinamide (FGAR). Formate is provided by PurU via hydrolysis of 10-formyl-tetrahydrofolate. This Salmonella arizonae (strain ATCC BAA-731 / CDC346-86 / RSK2980) protein is Formate-dependent phosphoribosylglycinamide formyltransferase.